Here is a 165-residue protein sequence, read N- to C-terminus: Lipoprotein signal peptidase (165 aa).

3 helical membrane passes run proline 9–valine 29, tryptophan 65–leucine 85, and threonine 97–valine 119. Catalysis depends on residues aspartate 121 and aspartate 139. A helical membrane pass occupies residues valine 134–phenylalanine 154.

This sequence belongs to the peptidase A8 family.

It localises to the cell inner membrane. It carries out the reaction Release of signal peptides from bacterial membrane prolipoproteins. Hydrolyzes -Xaa-Yaa-Zaa-|-(S,diacylglyceryl)Cys-, in which Xaa is hydrophobic (preferably Leu), and Yaa (Ala or Ser) and Zaa (Gly or Ala) have small, neutral side chains.. It functions in the pathway protein modification; lipoprotein biosynthesis (signal peptide cleavage). In terms of biological role, this protein specifically catalyzes the removal of signal peptides from prolipoproteins. The sequence is that of Lipoprotein signal peptidase from Histophilus somni (strain 129Pt) (Haemophilus somnus).